Reading from the N-terminus, the 327-residue chain is GTP 3',8-cyclase (327 aa).

Positions 21–233 (SYGRRIRKLR…AKIQQKYSLK (213 aa)) constitute a Radical SAM core domain. Arginine 30 is a GTP binding site. Residues cysteine 37 and cysteine 41 each coordinate [4Fe-4S] cluster. Tyrosine 43 contacts S-adenosyl-L-methionine. Cysteine 44 is a binding site for [4Fe-4S] cluster. Arginine 79 contributes to the GTP binding site. Residue glycine 83 participates in S-adenosyl-L-methionine binding. Residue threonine 109 participates in GTP binding. Serine 133 serves as a coordination point for S-adenosyl-L-methionine. GTP is bound at residue lysine 169. Methionine 203 is a binding site for S-adenosyl-L-methionine. [4Fe-4S] cluster is bound by residues cysteine 265 and cysteine 268. A GTP-binding site is contributed by 270 to 272 (RWR). Residue cysteine 282 coordinates [4Fe-4S] cluster.

Belongs to the radical SAM superfamily. MoaA family. In terms of assembly, monomer and homodimer. It depends on [4Fe-4S] cluster as a cofactor.

It catalyses the reaction GTP + AH2 + S-adenosyl-L-methionine = (8S)-3',8-cyclo-7,8-dihydroguanosine 5'-triphosphate + 5'-deoxyadenosine + L-methionine + A + H(+). It functions in the pathway cofactor biosynthesis; molybdopterin biosynthesis. Functionally, catalyzes the cyclization of GTP to (8S)-3',8-cyclo-7,8-dihydroguanosine 5'-triphosphate. The protein is GTP 3',8-cyclase of Synechocystis sp. (strain ATCC 27184 / PCC 6803 / Kazusa).